Reading from the N-terminus, the 256-residue chain is Thioredoxin-dependent peroxide reductase, mitochondrial (256 aa).

The N-terminal 61 residues, 1 to 61, are a transit peptide targeting the mitochondrion; the sequence is MAAAVGRLLR…KLFSTSSSYH (61 aa). A Thioredoxin domain is found at 63 to 221; sequence PAVTQHAPYF…TLRLVKAFQY (159 aa). Position 83 is an N6-succinyllysine (Lys83). Lys91 is subject to N6-acetyllysine; alternate. At Lys91 the chain carries N6-succinyllysine; alternate. Cys108 acts as the Cysteine sulfenic acid (-SOH) intermediate in catalysis. Residue Thr146 is modified to Phosphothreonine.

This sequence belongs to the peroxiredoxin family. AhpC/Prx1 subfamily. Homodimer; disulfide-linked, upon oxidation. 6 homodimers assemble to form a ring-like dodecamer. Interacts with NEK6. Interacts with LRRK2. Interacts with MAP3K13. Interacts with RPS6KC1 (via PX domain). Post-translationally, phosphorylated by LRRK2; phosphorylation reduces perodixase activity. The enzyme can be inactivated by further oxidation of the cysteine sulfenic acid (C(P)-SOH) to sulphinic acid (C(P)-SO2H) and sulphonic acid (C(P)-SO3H) instead of its condensation to a disulfide bond. In terms of processing, S-palmitoylated.

It is found in the mitochondrion. The protein localises to the cytoplasm. The protein resides in the early endosome. It catalyses the reaction a hydroperoxide + [thioredoxin]-dithiol = an alcohol + [thioredoxin]-disulfide + H2O. Functionally, thiol-specific peroxidase that catalyzes the reduction of hydrogen peroxide and organic hydroperoxides to water and alcohols, respectively. Plays a role in cell protection against oxidative stress by detoxifying peroxides. Acts synergistically with MAP3K13 to regulate the activation of NF-kappa-B in the cytosol. Required for the maintenance of physical strength. The polypeptide is Thioredoxin-dependent peroxide reductase, mitochondrial (PRDX3) (Pongo abelii (Sumatran orangutan)).